A 396-amino-acid polypeptide reads, in one-letter code: Cellular tumor antigen p53 (396 aa).

The interval 1-44 is transcription activation (acidic); the sequence is MADLAENVSLPLSQESFEDLWKMNLNLVAVQPPETESWVGYDNF. Residues 63 to 89 are disordered; sequence ATEPAPQPSISTLDTGSPPTSTVPTTS. Residues 77 to 89 show a composition bias toward low complexity; sequence TGSPPTSTVPTTS. A DNA-binding region spans residues 90–281; the sequence is DYPGALGFQL…KTEEINLKKQ (192 aa). Residues Cys-164, His-167, Cys-227, and Cys-231 each coordinate Zn(2+). An interaction with DNA region spans residues 262–269; that stretch reads RVCACPGR. A Bipartite nuclear localization signal motif is present at residues 297–317; it reads KRAMKEASLPAPQPGASKKTK. Residues 301 to 322 form a disordered region; sequence KEASLPAPQPGASKKTKSSPAV. Positions 325–356 are oligomerization; sequence DEIYTLQIRGKEKYEMLKKFNDSLELSELVPV. Residues 339-350 carry the Nuclear export signal motif; sequence EMLKKFNDSLEL. Residues 369–392 form a basic (repression of DNA-binding) region; the sequence is KRVAKRDFGVGPKKRKKLLVKEEK.

It belongs to the p53 family. In terms of assembly, binds DNA as a homotetramer. Zn(2+) serves as cofactor.

The protein resides in the cytoplasm. It localises to the nucleus. In terms of biological role, multifunctional transcription factor that induces cell cycle arrest, DNA repair or apoptosis upon binding to its target DNA sequence. Acts as a tumor suppressor in many tumor types; induces growth arrest or apoptosis depending on the physiological circumstances and cell type. Negatively regulates cell division by controlling expression of a set of genes required for this process. One of the activated genes is an inhibitor of cyclin-dependent kinases. Apoptosis induction seems to be mediated either by stimulation of BAX and FAS antigen expression, or by repression of Bcl-2 expression. This chain is Cellular tumor antigen p53 (tp53), found in Oncorhynchus mykiss (Rainbow trout).